A 465-amino-acid polypeptide reads, in one-letter code: Cytochrome P450 85A1 (465 aa).

A helical transmembrane segment spans residues 2-22; sequence GAMMVMMGLLLIIVSLCSALL. Heme is bound at residue Cys415.

It belongs to the cytochrome P450 family. It depends on heme as a cofactor. In terms of tissue distribution, mainly expressed in apical shoots, hypocotyls, siliques and roots. Also present in the female gametophyte.

Its subcellular location is the membrane. The catalysed reaction is 6-deoxoteasterone + reduced [NADPH--hemoprotein reductase] + O2 = 6alpha-hydroxyteasterone + oxidized [NADPH--hemoprotein reductase] + H2O + H(+). It catalyses the reaction 6alpha-hydroxytyphasterol + reduced [NADPH--hemoprotein reductase] + O2 = teasterone + oxidized [NADPH--hemoprotein reductase] + 2 H2O + H(+). The enzyme catalyses 3-dehydro-6-deoxoteasterone + reduced [NADPH--hemoprotein reductase] + O2 = 3-dehydro-6alpha-hydroxyteasterone + oxidized [NADPH--hemoprotein reductase] + H2O + H(+). It carries out the reaction 3-dehydro-6alpha-hydroxyteasterone + reduced [NADPH--hemoprotein reductase] + O2 = 3-dehydroteasterone + oxidized [NADPH--hemoprotein reductase] + 2 H2O + H(+). The catalysed reaction is 6-deoxotyphasterol + reduced [NADPH--hemoprotein reductase] + O2 = 6alpha-hydroxytyphasterol + oxidized [NADPH--hemoprotein reductase] + H2O + H(+). It catalyses the reaction 6alpha-hydroxytyphasterol + reduced [NADPH--hemoprotein reductase] + O2 = typhasterol + oxidized [NADPH--hemoprotein reductase] + 2 H2O + H(+). The enzyme catalyses 6-deoxocastasterone + reduced [NADPH--hemoprotein reductase] + O2 = 6alpha-hydroxycastasterone + oxidized [NADPH--hemoprotein reductase] + H2O + H(+). It carries out the reaction 6alpha-hydroxycastasterone + reduced [NADPH--hemoprotein reductase] + O2 = castasterone + oxidized [NADPH--hemoprotein reductase] + 2 H2O + H(+). The catalysed reaction is 6-deoxocastasterone + 2 reduced [NADPH--hemoprotein reductase] + 2 O2 = castasterone + 2 oxidized [NADPH--hemoprotein reductase] + 3 H2O + 2 H(+). It catalyses the reaction 6-deoxoteasterone + 2 reduced [NADPH--hemoprotein reductase] + 2 O2 = teasterone + 2 oxidized [NADPH--hemoprotein reductase] + 3 H2O + 2 H(+). The enzyme catalyses 6-deoxotyphasterol + 2 reduced [NADPH--hemoprotein reductase] + 2 O2 = typhasterol + 2 oxidized [NADPH--hemoprotein reductase] + 3 H2O + 2 H(+). It carries out the reaction 3-dehydro-6-deoxoteasterone + 2 reduced [NADPH--hemoprotein reductase] + 2 O2 = 3-dehydroteasterone + 2 oxidized [NADPH--hemoprotein reductase] + 3 H2O + 2 H(+). The protein operates within plant hormone biosynthesis; brassinosteroid biosynthesis. In terms of biological role, catalyzes the C6-oxidation step in brassinosteroids biosynthesis. Converts 6-deoxocastasterone (6-deoxoCS) to castasterone (CS). May also convert 6-deoxoteasterone (6-deoxoTE) to teasterone (TE), 3-dehydro-6-deoxoteasterone (6-deoxo3DT, 6-deoxo-3-DHT) to 3-dehydroteasterone (3DT, 3-DHT), and 6-deoxotyphasterol (6-deoxoTY) to typhasterol (TY). Required for the initiation of female gametogenesis (megagametogenesis). This Arabidopsis thaliana (Mouse-ear cress) protein is Cytochrome P450 85A1.